We begin with the raw amino-acid sequence, 236 residues long: Uridylate kinase (236 aa).

An ATP-binding site is contributed by 10 to 11; that stretch reads GS. Gly44 provides a ligand contact to UMP. Gly45 and Arg49 together coordinate ATP. Residues Asp66 and 114-120 contribute to the UMP site; that span reads ITPGQTT. ATP contacts are provided by Thr140, Tyr146, and Asp149.

It belongs to the UMP kinase family. As to quaternary structure, homohexamer.

The protein localises to the cytoplasm. The catalysed reaction is UMP + ATP = UDP + ADP. The protein operates within pyrimidine metabolism; CTP biosynthesis via de novo pathway; UDP from UMP (UMPK route): step 1/1. With respect to regulation, inhibited by UTP. Its function is as follows. Catalyzes the reversible phosphorylation of UMP to UDP. The polypeptide is Uridylate kinase (Methanospirillum hungatei JF-1 (strain ATCC 27890 / DSM 864 / NBRC 100397 / JF-1)).